We begin with the raw amino-acid sequence, 1228 residues long: DNA-directed RNA polymerase subunit beta (1228 aa).

Residues 1175 to 1204 (ESVDEDEQPQGLGAFEIGGDEIEEDKEDDK) form a disordered region. The span at 1192–1202 (GGDEIEEDKED) shows a compositional bias: acidic residues.

It belongs to the RNA polymerase beta chain family. In terms of assembly, the RNAP catalytic core consists of 2 alpha, 1 beta, 1 beta' and 1 omega subunit. When a sigma factor is associated with the core the holoenzyme is formed, which can initiate transcription.

It catalyses the reaction RNA(n) + a ribonucleoside 5'-triphosphate = RNA(n+1) + diphosphate. DNA-dependent RNA polymerase catalyzes the transcription of DNA into RNA using the four ribonucleoside triphosphates as substrates. The chain is DNA-directed RNA polymerase subunit beta from Caldicellulosiruptor bescii (strain ATCC BAA-1888 / DSM 6725 / KCTC 15123 / Z-1320) (Anaerocellum thermophilum).